A 189-amino-acid polypeptide reads, in one-letter code: Threonylcarbamoyl-AMP synthase (189 aa).

The 187-residue stretch at 3–189 (TTSVTEAAEC…NALTGEVIRP (187 aa)) folds into the YrdC-like domain.

It belongs to the SUA5 family. TsaC subfamily.

Its subcellular location is the cytoplasm. The catalysed reaction is L-threonine + hydrogencarbonate + ATP = L-threonylcarbamoyladenylate + diphosphate + H2O. In terms of biological role, required for the formation of a threonylcarbamoyl group on adenosine at position 37 (t(6)A37) in tRNAs that read codons beginning with adenine. Catalyzes the conversion of L-threonine, HCO(3)(-)/CO(2) and ATP to give threonylcarbamoyl-AMP (TC-AMP) as the acyladenylate intermediate, with the release of diphosphate. In Acinetobacter baumannii (strain ACICU), this protein is Threonylcarbamoyl-AMP synthase.